The sequence spans 275 residues: Hydroxyethylthiazole kinase (275 aa).

Substrate is bound at residue Met-57. Positions 132 and 178 each coordinate ATP. Residue Gly-205 participates in substrate binding.

This sequence belongs to the Thz kinase family. Requires Mg(2+) as cofactor.

It catalyses the reaction 5-(2-hydroxyethyl)-4-methylthiazole + ATP = 4-methyl-5-(2-phosphooxyethyl)-thiazole + ADP + H(+). It functions in the pathway cofactor biosynthesis; thiamine diphosphate biosynthesis; 4-methyl-5-(2-phosphoethyl)-thiazole from 5-(2-hydroxyethyl)-4-methylthiazole: step 1/1. Its function is as follows. Catalyzes the phosphorylation of the hydroxyl group of 4-methyl-5-beta-hydroxyethylthiazole (THZ). This Clavibacter sepedonicus (Clavibacter michiganensis subsp. sepedonicus) protein is Hydroxyethylthiazole kinase.